Reading from the N-terminus, the 189-residue chain is Large ribosomal subunit protein bL9 (189 aa).

The protein belongs to the bacterial ribosomal protein bL9 family.

Binds to the 23S rRNA. The chain is Large ribosomal subunit protein bL9 from Brucella melitensis biotype 2 (strain ATCC 23457).